A 178-amino-acid polypeptide reads, in one-letter code: MAMYGGQIHLIIGPMFAGKSTELIRLVKRYQIARYKCLVVNYEKDARYGNGVRTHDNTCISAVPTASLDDVESISEHVEVIGIDEGQFFPNIVSFCERMANAGKVLIVAALDGTFQRKPFTNICELIPLAENVTKLNAVCMYCYKDASFSKRLGNETEIEIIGGSDKYKSVCRKCYFF.

13-20 (GPMFAGKS) is a binding site for ATP. Glu85 serves as the catalytic Proton acceptor. Substrate is bound at residue Phe115. Cys140 and Cys143 together coordinate Zn(2+). 159 to 163 (IEIIG) contacts substrate. Zn(2+) is bound by residues Cys172 and Cys175.

This sequence belongs to the thymidine kinase family.

It catalyses the reaction thymidine + ATP = dTMP + ADP + H(+). This is Thymidine kinase (TK) from Myxoma virus (strain Uriarra) (MYXV).